The sequence spans 228 residues: Sec-independent protein translocase protein TatB (228 aa).

A helical membrane pass occupies residues Met-1–Gly-21. 2 disordered regions span residues Asp-109–Asp-162 and Pro-197–Ser-228. The segment covering Ala-206–Ser-228 has biased composition (basic residues).

It belongs to the TatB family. The Tat system comprises two distinct complexes: a TatABC complex, containing multiple copies of TatA, TatB and TatC subunits, and a separate TatA complex, containing only TatA subunits. Substrates initially bind to the TatABC complex, which probably triggers association of the separate TatA complex to form the active translocon.

The protein resides in the cell inner membrane. Part of the twin-arginine translocation (Tat) system that transports large folded proteins containing a characteristic twin-arginine motif in their signal peptide across membranes. Together with TatC, TatB is part of a receptor directly interacting with Tat signal peptides. TatB may form an oligomeric binding site that transiently accommodates folded Tat precursor proteins before their translocation. This Neisseria meningitidis serogroup B (strain ATCC BAA-335 / MC58) protein is Sec-independent protein translocase protein TatB.